A 116-amino-acid chain; its full sequence is Putative pterin-4-alpha-carbinolamine dehydratase 1 (116 aa).

The protein belongs to the pterin-4-alpha-carbinolamine dehydratase family.

The catalysed reaction is (4aS,6R)-4a-hydroxy-L-erythro-5,6,7,8-tetrahydrobiopterin = (6R)-L-erythro-6,7-dihydrobiopterin + H2O. The sequence is that of Putative pterin-4-alpha-carbinolamine dehydratase 1 from Gloeobacter violaceus (strain ATCC 29082 / PCC 7421).